Reading from the N-terminus, the 311-residue chain is Tyrosine recombinase XerD (311 aa).

The 94-residue stretch at 2 to 95 (KTLALQLQGY…AVRGLHRFAA (94 aa)) folds into the Core-binding (CB) domain. In terms of domain architecture, Tyr recombinase spans 116–304 (RLPKSLTIDE…TVHALREVWA (189 aa)). Catalysis depends on residues R160, K184, H256, R259, and H282. The O-(3'-phospho-DNA)-tyrosine intermediate role is filled by Y291.

This sequence belongs to the 'phage' integrase family. XerD subfamily. As to quaternary structure, forms a cyclic heterotetrameric complex composed of two molecules of XerC and two molecules of XerD.

It localises to the cytoplasm. Site-specific tyrosine recombinase, which acts by catalyzing the cutting and rejoining of the recombining DNA molecules. The XerC-XerD complex is essential to convert dimers of the bacterial chromosome into monomers to permit their segregation at cell division. It also contributes to the segregational stability of plasmids. The protein is Tyrosine recombinase XerD of Mycobacterium tuberculosis (strain CDC 1551 / Oshkosh).